The sequence spans 516 residues: Exoglucanase 1 (516 aa).

Positions 1 to 17 (MRASLLAFSLAAAVAGG) are cleaved as a signal peptide. The segment at 18-445 (QQAGTLTAKR…GHLGISPFSG (428 aa)) is catalytic. N-linked (GlcNAc...) asparagine glycosylation occurs at Asn-45. Glu-223 serves as the catalytic Nucleophile. Glu-228 acts as the Proton donor in catalysis. Asn-281 carries N-linked (GlcNAc...) asparagine glycosylation. The segment at 444–481 (SGGSSGTPPSNPSSSASPTSSTAKPSSTSTASNPSGTG) is disordered. Positions 446–480 (GSSGTPPSNPSSSASPTSSTAKPSSTSTASNPSGT) are linker. Positions 449–481 (GTPPSNPSSSASPTSSTAKPSSTSTASNPSGTG) are enriched in low complexity. The 37-residue stretch at 480–516 (TGAAHWAQCGGIGFSGPTTCPEPYTCAKDHDIYSQCV) folds into the CBM1 domain. 2 cysteine pairs are disulfide-bonded: Cys-488–Cys-505 and Cys-499–Cys-515.

It belongs to the glycosyl hydrolase 7 (cellulase C) family.

The protein localises to the secreted. It carries out the reaction Hydrolysis of (1-&gt;4)-beta-D-glucosidic linkages in cellulose and cellotetraose, releasing cellobiose from the non-reducing ends of the chains.. This is Exoglucanase 1 (cbh-1) from Neurospora crassa (strain ATCC 24698 / 74-OR23-1A / CBS 708.71 / DSM 1257 / FGSC 987).